We begin with the raw amino-acid sequence, 225 residues long: Methylthioribulose-1-phosphate dehydratase (225 aa).

Positions 106 and 108 each coordinate Zn(2+).

Belongs to the aldolase class II family. MtnB subfamily. Zn(2+) is required as a cofactor.

It carries out the reaction 5-(methylsulfanyl)-D-ribulose 1-phosphate = 5-methylsulfanyl-2,3-dioxopentyl phosphate + H2O. Its pathway is amino-acid biosynthesis; L-methionine biosynthesis via salvage pathway; L-methionine from S-methyl-5-thio-alpha-D-ribose 1-phosphate: step 2/6. Functionally, catalyzes the dehydration of methylthioribulose-1-phosphate (MTRu-1-P) into 2,3-diketo-5-methylthiopentyl-1-phosphate (DK-MTP-1-P). This is Methylthioribulose-1-phosphate dehydratase from Xanthomonas oryzae pv. oryzae (strain MAFF 311018).